A 109-amino-acid chain; its full sequence is Thiosulfate sulfurtransferase GlpE (109 aa).

In terms of domain architecture, Rhodanese spans 16–104; it reads RNAGAVIVDI…WRHTYPSDVE (89 aa). Catalysis depends on Cys64, which acts as the Cysteine persulfide intermediate.

This sequence belongs to the GlpE family.

It is found in the cytoplasm. It catalyses the reaction thiosulfate + hydrogen cyanide = thiocyanate + sulfite + 2 H(+). The enzyme catalyses thiosulfate + [thioredoxin]-dithiol = [thioredoxin]-disulfide + hydrogen sulfide + sulfite + 2 H(+). Transferase that catalyzes the transfer of sulfur from thiosulfate to thiophilic acceptors such as cyanide or dithiols. May function in a CysM-independent thiosulfate assimilation pathway by catalyzing the conversion of thiosulfate to sulfite, which can then be used for L-cysteine biosynthesis. In Stutzerimonas stutzeri (strain A1501) (Pseudomonas stutzeri), this protein is Thiosulfate sulfurtransferase GlpE.